The chain runs to 178 residues: Crossover junction endodeoxyribonuclease RuvC (178 aa).

Active-site residues include D11, E71, and D143. Mg(2+) contacts are provided by D11, E71, and D143.

It belongs to the RuvC family. As to quaternary structure, homodimer which binds Holliday junction (HJ) DNA. The HJ becomes 2-fold symmetrical on binding to RuvC with unstacked arms; it has a different conformation from HJ DNA in complex with RuvA. In the full resolvosome a probable DNA-RuvA(4)-RuvB(12)-RuvC(2) complex forms which resolves the HJ. The cofactor is Mg(2+).

The protein resides in the cytoplasm. It catalyses the reaction Endonucleolytic cleavage at a junction such as a reciprocal single-stranded crossover between two homologous DNA duplexes (Holliday junction).. In terms of biological role, the RuvA-RuvB-RuvC complex processes Holliday junction (HJ) DNA during genetic recombination and DNA repair. Endonuclease that resolves HJ intermediates. Cleaves cruciform DNA by making single-stranded nicks across the HJ at symmetrical positions within the homologous arms, yielding a 5'-phosphate and a 3'-hydroxyl group; requires a central core of homology in the junction. The consensus cleavage sequence is 5'-(A/T)TT(C/G)-3'. Cleavage occurs on the 3'-side of the TT dinucleotide at the point of strand exchange. HJ branch migration catalyzed by RuvA-RuvB allows RuvC to scan DNA until it finds its consensus sequence, where it cleaves and resolves the cruciform DNA. In Neisseria meningitidis serogroup A / serotype 4A (strain DSM 15465 / Z2491), this protein is Crossover junction endodeoxyribonuclease RuvC.